The primary structure comprises 527 residues: Pyruvate kinase 2, cytosolic (527 aa).

Substrate is bound at residue R58. Residues D60, S62, D92, and T93 each contribute to the K(+) site. 60 to 63 (DFSW) is a binding site for ATP. K256 is a substrate binding site. E258 is a Mg(2+) binding site. Substrate contacts are provided by G281, N282, and T313. N282 serves as a coordination point for Mg(2+).

The protein belongs to the pyruvate kinase family. Homotetramer. Mg(2+) serves as cofactor. It depends on K(+) as a cofactor.

It is found in the cytoplasm. The protein localises to the cytosol. It carries out the reaction pyruvate + ATP = phosphoenolpyruvate + ADP + H(+). It participates in carbohydrate degradation; glycolysis; pyruvate from D-glyceraldehyde 3-phosphate: step 5/5. In terms of biological role, key regulatory enzyme of the glycolytic pathway that catalyzes the final step of glycolysis, converting ADP and phosphoenolpyruvate (PEP) to ATP and pyruvate by essentially irreversible transphosphorylation. This is Pyruvate kinase 2, cytosolic from Oryza sativa subsp. indica (Rice).